The sequence spans 257 residues: High-affinity copper transporter ctrC (257 aa).

The next 2 membrane-spanning stretches (helical) occupy residues 79 to 99 (RGMF…LEFL) and 202 to 222 (YFNG…SFIF).

The protein belongs to the copper transporter (Ctr) (TC 1.A.56) family. SLC31A subfamily.

It localises to the cell membrane. The enzyme catalyses Cu(2+)(in) = Cu(2+)(out). Functionally, high-affinity copper transporter of plasma membrane that mediates copper uptake under low copper conditions. The mechanism driving the transmembrane transport of copper has still to be determined. Acts as a potential virulence factor. In Aspergillus fumigatus (strain ATCC MYA-4609 / CBS 101355 / FGSC A1100 / Af293) (Neosartorya fumigata), this protein is High-affinity copper transporter ctrC.